The sequence spans 118 residues: Large ribosomal subunit protein bL19 (118 aa).

Belongs to the bacterial ribosomal protein bL19 family.

Its function is as follows. This protein is located at the 30S-50S ribosomal subunit interface and may play a role in the structure and function of the aminoacyl-tRNA binding site. In Campylobacter jejuni subsp. jejuni serotype O:2 (strain ATCC 700819 / NCTC 11168), this protein is Large ribosomal subunit protein bL19.